The chain runs to 212 residues: Putative 3-methyladenine DNA glycosylase (212 aa).

It belongs to the DNA glycosylase MPG family.

This chain is Putative 3-methyladenine DNA glycosylase, found in Nocardia farcinica (strain IFM 10152).